The primary structure comprises 407 residues: Proteasomal ubiquitin receptor ADRM1 (407 aa).

T2 bears the N-acetylthreonine mark. At S15 the chain carries Phosphoserine. The Pru domain occupies 18 to 131 (ASNKYLVEFR…RKVNEYLNNP (114 aa)). Residue K34 forms a Glycyl lysine isopeptide (Lys-Gly) (interchain with G-Cter in ubiquitin) linkage. Residue Y127 is modified to Phosphotyrosine. Residues S140 and S211 each carry the phosphoserine modification. 2 disordered regions span residues 194-259 (LLGS…ASPT) and 379-407 (KAMQNNAKPEQKEGDTKDKKDEEEDMSLD). T217 carries the post-translational modification Phosphothreonine. Residues 253-407 (STAASPTQPI…KDEEEDMSLD (155 aa)) are interaction with UCHL5. Residues 277–391 (PAGPAGGQQV…QNNAKPEQKE (115 aa)) enclose the DEUBAD domain. A compositionally biased stretch (basic and acidic residues) spans 387–398 (PEQKEGDTKDKK). S405 carries the post-translational modification Phosphoserine.

The protein belongs to the ADRM1 family. As to quaternary structure, component of the 19S proteasome regulatory particle complex. The 26S proteasome consists of a 20S core particle (CP) and two 19S regulatory subunits (RP). Interacts with the proteasomal scaffolding protein PSMD1. Interacts with deubiquitinase UCHL5; this interaction activates the auto-inhibited UCHL5 by deoligomerizing it. Interacts with UBQLN2 and ubiquitin. In terms of processing, ubiquitinated by UBE3C in response to proteotoxic stress.

It localises to the cytoplasm. The protein localises to the nucleus. Component of the 26S proteasome, a multiprotein complex involved in the ATP-dependent degradation of ubiquitinated proteins. This complex plays a key role in the maintenance of protein homeostasis by removing misfolded or damaged proteins, which could impair cellular functions, and by removing proteins whose functions are no longer required. Therefore, the proteasome participates in numerous cellular processes, including cell cycle progression, apoptosis, or DNA damage repair. Within the complex, functions as a proteasomal ubiquitin receptor. Engages and activates 19S-associated deubiquitinases UCHL5 and PSMD14 during protein degradation. UCHL5 reversibly associate with the 19S regulatory particle whereas PSMD14 is an intrinsic subunit of the proteasome lid subcomplex. The chain is Proteasomal ubiquitin receptor ADRM1 (ADRM1) from Homo sapiens (Human).